Here is a 252-residue protein sequence, read N- to C-terminus: Phosphomannomutase (252 aa).

Asp13 (nucleophile) is an active-site residue. Mg(2+) contacts are provided by Asp13 and Asp15. Residue Asp15 is the Proton donor/acceptor of the active site. Alpha-D-mannose 1-phosphate contacts are provided by Arg22, Arg124, Arg135, Arg142, Ser180, and Asp182. Mg(2+) is bound by residues Asp208, Tyr220, and Thr225.

The protein belongs to the eukaryotic PMM family. As to quaternary structure, homodimer. The cofactor is Mg(2+). Expressed in roots, leaves, stems and flowers.

It localises to the cytoplasm. It carries out the reaction alpha-D-mannose 1-phosphate = D-mannose 6-phosphate. Its pathway is nucleotide-sugar biosynthesis; GDP-alpha-D-mannose biosynthesis; alpha-D-mannose 1-phosphate from D-fructose 6-phosphate: step 2/2. Its function is as follows. Catalyzes the interconversion of mannose-6-phosphate to mannose-1-phosphate, the precursor for the synthesis of GDP-mannose. GDP-mannose is an essential sugar nucleotide for the synthesis of D-mannose-containing cell wall polysaccharides (galactomannans and glucomannans), glycolipids, glycoproteins and the antioxidant L-ascorbate. Involved in the biosynthesis of ascorbate and polysaccharides in response to abiotic stress during seed germination. The chain is Phosphomannomutase from Dendrobium officinale (Orchid).